A 392-amino-acid chain; its full sequence is Formate-dependent phosphoribosylglycinamide formyltransferase (392 aa).

Residues 22-23 (EL) and glutamate 82 contribute to the N(1)-(5-phospho-beta-D-ribosyl)glycinamide site. ATP contacts are provided by residues arginine 114, lysine 155, 160–165 (SSGKGQ), 195–198 (EGVV), and glutamate 203. In terms of domain architecture, ATP-grasp spans 119–308 (RLAAEELGLP…EFALHVRAFL (190 aa)). Positions 267 and 279 each coordinate Mg(2+). N(1)-(5-phospho-beta-D-ribosyl)glycinamide contacts are provided by residues aspartate 286, lysine 355, and 362–363 (RR).

This sequence belongs to the PurK/PurT family. Homodimer.

It catalyses the reaction N(1)-(5-phospho-beta-D-ribosyl)glycinamide + formate + ATP = N(2)-formyl-N(1)-(5-phospho-beta-D-ribosyl)glycinamide + ADP + phosphate + H(+). It participates in purine metabolism; IMP biosynthesis via de novo pathway; N(2)-formyl-N(1)-(5-phospho-D-ribosyl)glycinamide from N(1)-(5-phospho-D-ribosyl)glycinamide (formate route): step 1/1. Functionally, involved in the de novo purine biosynthesis. Catalyzes the transfer of formate to 5-phospho-ribosyl-glycinamide (GAR), producing 5-phospho-ribosyl-N-formylglycinamide (FGAR). Formate is provided by PurU via hydrolysis of 10-formyl-tetrahydrofolate. This chain is Formate-dependent phosphoribosylglycinamide formyltransferase, found in Salmonella schwarzengrund (strain CVM19633).